Here is a 138-residue protein sequence, read N- to C-terminus: MLIPRRVKHRKQHHPSRSGAAKGGTQVTFGDYGIQALEPAYITNRQIESARIAMTRHIKRGGKIWINIFPDRPLTKKPAETRMGSGKGSPEWWIANVKPGRVLFEMTYPNEEIAREALRRAMHKLPCKCRIVTREEQF.

A compositionally biased stretch (basic residues) spans 1-16 (MLIPRRVKHRKQHHPS). Positions 1–25 (MLIPRRVKHRKQHHPSRSGAAKGGT) are disordered.

The protein belongs to the universal ribosomal protein uL16 family. Part of the 50S ribosomal subunit.

Its function is as follows. Binds 23S rRNA and is also seen to make contacts with the A and possibly P site tRNAs. The chain is Large ribosomal subunit protein uL16 from Rhodococcus erythropolis (strain PR4 / NBRC 100887).